The chain runs to 580 residues: Membrane protein insertase YidC (580 aa).

The next 6 helical transmembrane spans lie at 5–25, 259–279, 362–382, 427–447, 477–497, and 513–533; these read SVTG…FMSP, KYFV…LDGS, GLII…LSLA, LGGC…FYVF, IPMY…TVFV, and IMLY…PSGL.

This sequence belongs to the OXA1/ALB3/YidC family. Type 1 subfamily. In terms of assembly, interacts with the Sec translocase complex via SecD. Specifically interacts with transmembrane segments of nascent integral membrane proteins during membrane integration.

It localises to the cell inner membrane. Functionally, required for the insertion and/or proper folding and/or complex formation of integral membrane proteins into the membrane. Involved in integration of membrane proteins that insert both dependently and independently of the Sec translocase complex, as well as at least some lipoproteins. Aids folding of multispanning membrane proteins. The sequence is that of Membrane protein insertase YidC from Chlorobium phaeovibrioides (strain DSM 265 / 1930) (Prosthecochloris vibrioformis (strain DSM 265)).